The chain runs to 548 residues: T-complex protein 1 subunit theta (548 aa).

A disordered region spans residues 527 to 548 (QATGGPKPRGPKAQDEDDDGMA).

This sequence belongs to the TCP-1 chaperonin family. Heterooligomeric complex.

It localises to the cytoplasm. Molecular chaperone; assists the folding of proteins upon ATP hydrolysis. Known to play a role, in vitro, in the folding of actin and tubulin. Required for correct subcellular localization of pgl-1. The protein is T-complex protein 1 subunit theta (cct-8) of Caenorhabditis elegans.